The chain runs to 121 residues: Flagellar protein FliT (121 aa).

Positions 1–50 are required for homodimerization; that stretch reads MNNAPHLYFAWQQLVEKSQLMLRLATEEQWDELIASEMAYVNAVQEIAHL. Residues 60–98 are fliD binding; that stretch reads MQEQLRPMLHLILDNESKVKQLLQIRMDELAKLVGQSSV.

It belongs to the FliT family. In terms of assembly, homodimer. Interacts with FliD and FlhC.

It localises to the cytoplasm. Its subcellular location is the cytosol. In terms of biological role, dual-function protein that regulates the transcription of class 2 flagellar operons and that also acts as an export chaperone for the filament-capping protein FliD. As a transcriptional regulator, acts as an anti-FlhDC factor; it directly binds FlhC, thus inhibiting the binding of the FlhC/FlhD complex to class 2 promoters, resulting in decreased expression of class 2 flagellar operons. As a chaperone, effects FliD transition to the membrane by preventing its premature polymerization, and by directing it to the export apparatus. The protein is Flagellar protein FliT of Escherichia coli O17:K52:H18 (strain UMN026 / ExPEC).